The chain runs to 476 residues: Cytosolic iron-sulfur assembly component 3 (476 aa).

The residue at position 2 (Ala-2) is an N-acetylalanine. Residues Cys-24, Cys-71, Cys-74, Cys-77, Cys-190, Cys-246, Cys-395, and Cys-399 each contribute to the [4Fe-4S] cluster site.

It belongs to the NARF family. External component of the CIA complex. In the CIA complex, interacts directly with CIAO1 and MMS19.

Functionally, component of the cytosolic iron-sulfur protein assembly (CIA) complex, a multiprotein complex that mediates the incorporation of iron-sulfur cluster into extramitochondrial Fe/S proteins. Seems to negatively regulate the level of HIF1A expression, although this effect could be indirect. The chain is Cytosolic iron-sulfur assembly component 3 from Bos taurus (Bovine).